The following is a 199-amino-acid chain: Transgelin-2 (199 aa).

At A2 the chain carries N-acetylalanine. A Phosphoserine modification is found at S11. Residues K17 and K20 each carry the N6-acetyllysine modification. The Calponin-homology (CH) domain maps to 24–136 (ADLEQILIQW…RTLMNLGGLA (113 aa)). Residue S163 is modified to Phosphoserine. Residue K171 forms a Glycyl lysine isopeptide (Lys-Gly) (interchain with G-Cter in SUMO2) linkage. The stretch at 174–199 (IGLQMGTNRGASQAGMTGYGMPRQIL) is one Calponin-like repeat. The residue at position 180 (T180) is a Phosphothreonine. 2 positions are modified to omega-N-methylarginine: R182 and R196.

Belongs to the calponin family.

The chain is Transgelin-2 (TAGLN2) from Bos taurus (Bovine).